We begin with the raw amino-acid sequence, 334 residues long: Cytoplasmic envelopment protein 2 (334 aa).

It belongs to the herpesviridae cytoplasmic envelopment protein 2 family. As to quaternary structure, interacts with cytoplasmic envelopment protein 3 and with the capsid.

It is found in the virion tegument. The protein resides in the host cytoplasm. It localises to the host nucleus. Its function is as follows. Plays a critical role in cytoplasmic virus egress. Participates in the final step of tegumentation and envelope acquisition within the host cytoplasm by directly interacting with the capsid. Upon virion binding to target cell, a signaling cascade is triggered to disrupt the interaction with the capsid, thereby preparing capsid uncoating. The protein is Cytoplasmic envelopment protein 2 (ORF33) of Homo sapiens (Human).